We begin with the raw amino-acid sequence, 700 residues long: Elongation factor G (700 aa).

The region spanning 10–286 (NKVRNIGIMA…AVIDYLPNPL (277 aa)) is the tr-type G domain. Residues 19–26 (AHIDAGKT), 83–87 (DTPGH), and 137–140 (NKMD) contribute to the GTP site.

It belongs to the TRAFAC class translation factor GTPase superfamily. Classic translation factor GTPase family. EF-G/EF-2 subfamily.

Its subcellular location is the cytoplasm. Catalyzes the GTP-dependent ribosomal translocation step during translation elongation. During this step, the ribosome changes from the pre-translocational (PRE) to the post-translocational (POST) state as the newly formed A-site-bound peptidyl-tRNA and P-site-bound deacylated tRNA move to the P and E sites, respectively. Catalyzes the coordinated movement of the two tRNA molecules, the mRNA and conformational changes in the ribosome. This chain is Elongation factor G, found in Rhodococcus jostii (strain RHA1).